A 525-amino-acid chain; its full sequence is Retinoblastoma-binding-like protein E (525 aa).

5 WD repeats span residues 25–66, 69–108, 222–261, 267–312, and 313–352; these read PKNI…IVRT, HHTG…ILYS, SSNT…LYQQ, DSVN…KDLE, and GPKE…NWSS. Disordered regions lie at residues 371-398 and 462-525; these read DEFD…RNPY and EKYQ…KKRK. A compositionally biased stretch (low complexity) spans 383-392; the sequence is QEVNNNNNNN. Basic and acidic residues predominate over residues 462 to 471; it reads EKYQKDKEDS. A compositionally biased stretch (low complexity) spans 472-500; it reads SSTTSNSTISSSSSPSPSSSSTTTTTTTS. Over residues 501-525 the composition is skewed to basic and acidic residues; it reads QKKDETQKKEKSTKKERNSDSKKRK.

The protein resides in the nucleus. Functionally, involved in mono-, di- and trimethylation at 'Lys-4' of histone H3. Histone H3 'Lys-4' methylation represents a specific tag for epigenetic transcriptional activation. This Dictyostelium discoideum (Social amoeba) protein is Retinoblastoma-binding-like protein E.